Here is a 121-residue protein sequence, read N- to C-terminus: Small ribosomal subunit protein bS21m (121 aa).

A mitochondrion-targeting transit peptide spans 1-14; the sequence is MNSSYFPGVLGVRW.

This sequence belongs to the bacterial ribosomal protein bS21 family. Component of the mitochondrial small ribosomal subunit (mt-SSU). Mature yeast 74S mitochondrial ribosomes consist of a small (37S) and a large (54S) subunit. The 37S small subunit contains a 15S ribosomal RNA (15S mt-rRNA) and at least 32 different proteins. The 54S large subunit contains a 21S rRNA (21S mt-rRNA) and at least 45 different proteins.

It is found in the mitochondrion. In terms of biological role, component of the mitochondrial ribosome (mitoribosome), a dedicated translation machinery responsible for the synthesis of mitochondrial genome-encoded proteins, including at least some of the essential transmembrane subunits of the mitochondrial respiratory chain. The mitoribosomes are attached to the mitochondrial inner membrane and translation products are cotranslationally integrated into the membrane. The protein is Small ribosomal subunit protein bS21m (mrp21) of Schizosaccharomyces pombe (strain 972 / ATCC 24843) (Fission yeast).